Reading from the N-terminus, the 49-residue chain is Large ribosomal subunit protein bL33B (49 aa).

This sequence belongs to the bacterial ribosomal protein bL33 family.

In Geobacillus thermodenitrificans (strain NG80-2), this protein is Large ribosomal subunit protein bL33B.